The following is a 392-amino-acid chain: uncharacterized protein (392 aa).

The N-terminal 34 residues, 1–34, are a transit peptide targeting the mitochondrion; sequence MCISSSSLLCGINSLKYASNRVGILIPPFQTASS. 8 helical membrane-spanning segments follow: residues 115–135, 150–172, 185–205, 208–225, 277–297, 299–319, 321–341, and 350–370; these read VAIM…WHWD, FRFM…WWTL, LLVN…KFGV, ALSV…VALQ, ATFV…AVYA, AAIF…VYPV, AGIF…LNYE, and AHVS…PAMW. S292 acts as the Nucleophile in catalysis. The active site involves H351.

The protein belongs to the peptidase S54 family.

It is found in the mitochondrion inner membrane. This is an uncharacterized protein from Schizosaccharomyces pombe (strain 972 / ATCC 24843) (Fission yeast).